We begin with the raw amino-acid sequence, 610 residues long: F-box/LRR-repeat protein 4 (610 aa).

Residues 5–52 (DRINNCLPEELILEIFRRLESKPNRDACSLVCKRWLSLERFSRTTLRI) enclose the F-box domain. LRR repeat units lie at residues 53–79 (GASFSPDDFISLLSRRFLYITSIHVDE), 124–149 (SSSLTDTGLTALANGFPRIENLSLIW), 150–175 (CPNVSSVGLCSLAQKCTSLKSLDLQG), 178–200 (VGDQGLAAVGKFCKQLEELNLRF), 201–227 (CEGLTDVGVIDLVVGCSKSLKSIGVAA), 228–253 (SAKITDLSLEAVGSHCKLLEVLYLDS), 256–277 (IHDKGLIAVAQGCHRLKNLKLQ), 278–303 (CVSVTDVAFAAVGELCTSLERLALYS), 304–329 (FQHFTDKGMRAIGKGSKKLKDLTLSD), 330–355 (CYFVSCKGLEAIAHGCKELERVEING), 356–381 (CHNIGTRGIEAIGKSCPRLKELALLY), 382–407 (CQRIGNSALQEIGKGCKSLEILHLVD), 408–433 (CSGIGDIAMCSIAKGCRNLKKLHIRR), 434–459 (CYEIGNKGIISIGKHCKSLTELSLRF), 460–484 (CDKVGNKALIAIGKGCSLQQLNVSG), 485–510 (CNQISDAGITAIARGCPQLTHLDISV), 511–536 (LQNIGDMPLAELGEGCPMLKDLVLSH), 537–562 (CHHITDNGLNHLVQKCKLLETCHMVY), and 563–588 (CPGITSAGVATVVSSCPHIKKVLIEK). Residues 88-125 (LSPSPKRKRGRDSSSPSSSKRKKLTDKTHSGAENVESS) are disordered.

The polypeptide is F-box/LRR-repeat protein 4 (FBL4) (Arabidopsis thaliana (Mouse-ear cress)).